The following is a 184-amino-acid chain: ATP synthase subunit delta (184 aa).

This sequence belongs to the ATPase delta chain family. As to quaternary structure, F-type ATPases have 2 components, F(1) - the catalytic core - and F(0) - the membrane proton channel. F(1) has five subunits: alpha(3), beta(3), gamma(1), delta(1), epsilon(1). F(0) has three main subunits: a(1), b(2) and c(10-14). The alpha and beta chains form an alternating ring which encloses part of the gamma chain. F(1) is attached to F(0) by a central stalk formed by the gamma and epsilon chains, while a peripheral stalk is formed by the delta and b chains.

It is found in the cell membrane. Functionally, f(1)F(0) ATP synthase produces ATP from ADP in the presence of a proton or sodium gradient. F-type ATPases consist of two structural domains, F(1) containing the extramembraneous catalytic core and F(0) containing the membrane proton channel, linked together by a central stalk and a peripheral stalk. During catalysis, ATP synthesis in the catalytic domain of F(1) is coupled via a rotary mechanism of the central stalk subunits to proton translocation. This protein is part of the stalk that links CF(0) to CF(1). It either transmits conformational changes from CF(0) to CF(1) or is implicated in proton conduction. In Bacillus licheniformis (strain ATCC 14580 / DSM 13 / JCM 2505 / CCUG 7422 / NBRC 12200 / NCIMB 9375 / NCTC 10341 / NRRL NRS-1264 / Gibson 46), this protein is ATP synthase subunit delta.